The sequence spans 244 residues: Tetraspanin-7 (244 aa).

Over 1 to 11 (METKPVITCLK) the chain is Cytoplasmic. Residues 12–35 (TLLIIYSFVFWITGVILLAVGVWG) traverse the membrane as a helical segment. Residues 36–51 (KLTLGTYISLIAENST) are Extracellular-facing. Residue Asn-49 is glycosylated (N-linked (GlcNAc...) asparagine). The chain crosses the membrane as a helical span at residues 52–70 (NAPYVLIGTGTTIVVFGLF). Residues 71–81 (GCFATCRGSPW) lie on the Cytoplasmic side of the membrane. The helical transmembrane segment at 82 to 107 (MLKLYAMFLSLVFLAELVAGISGFVF) threads the bilayer. The Extracellular segment spans residues 108–208 (RHEIKDTFLR…LVTSFMETNM (101 aa)). Residues Asn-150, Asn-153, Asn-172, and Asn-183 are each glycosylated (N-linked (GlcNAc...) asparagine). The chain crosses the membrane as a helical span at residues 209 to 229 (GIIAGVAFGIAFSQLIGMLLA). The Cytoplasmic portion of the chain corresponds to 230–244 (CCLSRFITANQYEMV).

It belongs to the tetraspanin (TM4SF) family.

The protein resides in the membrane. Functionally, may be involved in cell proliferation and cell motility. The protein is Tetraspanin-7 (TSPAN7) of Pan troglodytes (Chimpanzee).